The chain runs to 572 residues: Probable pyruvate decarboxylase C186.09 (572 aa).

Positions 38 and 125 each coordinate substrate. The interval 400 to 482 (DSWFGGMRIT…FLINNRGYTI (83 aa)) is thiamine pyrophosphate binding. Mg(2+) contacts are provided by Asp450, Asn477, and Gly479. Glu483 is a substrate binding site.

Belongs to the TPP enzyme family. In terms of assembly, homotetramer. Requires a metal cation as cofactor. Thiamine diphosphate is required as a cofactor.

It catalyses the reaction a 2-oxocarboxylate + H(+) = an aldehyde + CO2. This is Probable pyruvate decarboxylase C186.09 from Schizosaccharomyces pombe (strain 972 / ATCC 24843) (Fission yeast).